We begin with the raw amino-acid sequence, 292 residues long: Shikimate dehydrogenase (NADP(+)) (292 aa).

Shikimate contacts are provided by residues 22-24 (SLS) and Ser-69. Catalysis depends on Lys-73, which acts as the Proton acceptor. Residues Asn-94 and Asp-111 each coordinate shikimate. NADP(+) is bound by residues 135–139 (GVGGA) and Ile-236. Tyr-238 provides a ligand contact to shikimate. Gly-260 serves as a coordination point for NADP(+).

The protein belongs to the shikimate dehydrogenase family. Homodimer.

It catalyses the reaction shikimate + NADP(+) = 3-dehydroshikimate + NADPH + H(+). The protein operates within metabolic intermediate biosynthesis; chorismate biosynthesis; chorismate from D-erythrose 4-phosphate and phosphoenolpyruvate: step 4/7. Its function is as follows. Involved in the biosynthesis of the chorismate, which leads to the biosynthesis of aromatic amino acids. Catalyzes the reversible NADPH linked reduction of 3-dehydroshikimate (DHSA) to yield shikimate (SA). This chain is Shikimate dehydrogenase (NADP(+)), found in Streptococcus pyogenes serotype M2 (strain MGAS10270).